A 117-amino-acid chain; its full sequence is Ribonuclease P protein component (117 aa).

It belongs to the RnpA family. Consists of a catalytic RNA component (M1 or rnpB) and a protein subunit.

It carries out the reaction Endonucleolytic cleavage of RNA, removing 5'-extranucleotides from tRNA precursor.. Its function is as follows. RNaseP catalyzes the removal of the 5'-leader sequence from pre-tRNA to produce the mature 5'-terminus. It can also cleave other RNA substrates such as 4.5S RNA. The protein component plays an auxiliary but essential role in vivo by binding to the 5'-leader sequence and broadening the substrate specificity of the ribozyme. The sequence is that of Ribonuclease P protein component from Desulforapulum autotrophicum (strain ATCC 43914 / DSM 3382 / VKM B-1955 / HRM2) (Desulfobacterium autotrophicum).